The sequence spans 280 residues: Adenosylcobinamide-GDP ribazoletransferase (280 aa).

A run of 6 helical transmembrane segments spans residues 44-64 (GVGVLVGALVAAFTALLLFVL), 69-89 (STPLVAAALGTALGVLLTGAF), 111-131 (LVIMKDSRVGAFGAIAVMLAL), 135-155 (VALLALLGAVSATLMVAALFV), 189-209 (ISVAALLTGFIWCFMALALVI), and 226-246 (ALLQALLSAVVASCVAWAVMA).

It belongs to the CobS family. It depends on Mg(2+) as a cofactor.

Its subcellular location is the cell inner membrane. The enzyme catalyses alpha-ribazole + adenosylcob(III)inamide-GDP = adenosylcob(III)alamin + GMP + H(+). The catalysed reaction is alpha-ribazole 5'-phosphate + adenosylcob(III)inamide-GDP = adenosylcob(III)alamin 5'-phosphate + GMP + H(+). It participates in cofactor biosynthesis; adenosylcobalamin biosynthesis; adenosylcobalamin from cob(II)yrinate a,c-diamide: step 7/7. Joins adenosylcobinamide-GDP and alpha-ribazole to generate adenosylcobalamin (Ado-cobalamin). Also synthesizes adenosylcobalamin 5'-phosphate from adenosylcobinamide-GDP and alpha-ribazole 5'-phosphate. The sequence is that of Adenosylcobinamide-GDP ribazoletransferase from Albidiferax ferrireducens (strain ATCC BAA-621 / DSM 15236 / T118) (Rhodoferax ferrireducens).